The chain runs to 488 residues: Malonate-semialdehyde dehydrogenase (488 aa).

NAD(+)-binding residues include A150, F152, K176, E179, R180, S229, and T251. The Nucleophile role is filled by C284. E382 serves as a coordination point for NAD(+).

This sequence belongs to the aldehyde dehydrogenase family. IolA subfamily. Homotetramer.

The enzyme catalyses 3-oxopropanoate + NAD(+) + CoA + H2O = hydrogencarbonate + acetyl-CoA + NADH + H(+). It carries out the reaction 2-methyl-3-oxopropanoate + NAD(+) + CoA + H2O = propanoyl-CoA + hydrogencarbonate + NADH + H(+). The protein operates within polyol metabolism; myo-inositol degradation into acetyl-CoA; acetyl-CoA from myo-inositol: step 7/7. Functionally, catalyzes the oxidation of malonate semialdehyde (MSA) and methylmalonate semialdehyde (MMSA) into acetyl-CoA and propanoyl-CoA, respectively. Is involved in a myo-inositol catabolic pathway. Bicarbonate, and not CO2, is the end-product of the enzymatic reaction. The chain is Malonate-semialdehyde dehydrogenase from Listeria monocytogenes serotype 4b (strain CLIP80459).